Here is a 388-residue protein sequence, read N- to C-terminus: MGGPRFKDKVFLKCAICQESAEGFHFGAEACRACAAFFRRTVSNRKTYSCQGNNDCDVTINIRCMCRACRYIKCIEVGMNPAGVQQRLPPSKTLVEVSMDLPTVSNPSILSFPSPPSSLMLHIPSSYSNQMPILDKMRKSYETLCNARKTLHRKDGANIFQDNVPKPVTYKKAIDQGMKDVKLTSDWVSWCFEDFKNLSIDQKKILFHNAYTPYFMMEGGFLSHIRNTPEHLVMPSGDYIDTLDLNSFYNCSESDRQISSKEIDRLFKPSNDRFIKSVTLPMMSLQLDIFEFFVLFTLLLWDTGLIEISEECIEIGTKVKTQVLKELDFYMRNVKKVEEPLVRTANIVNLLPAVQKGVRRIQDDLEVTKVFDLYTASDEFYNLMSGRF.

A DNA-binding region (nuclear receptor) is located at residues 11 to 86; the sequence is FLKCAICQES…VGMNPAGVQQ (76 aa). NR C4-type zinc fingers lie at residues 14 to 34 and 50 to 74; these read CAIC…CRAC and CQGN…YIKC. One can recognise an NR LBD domain in the interval 115 to 387; sequence PPSSLMLHIP…DEFYNLMSGR (273 aa).

Belongs to the nuclear hormone receptor family.

It localises to the nucleus. Orphan nuclear receptor. The protein is Nuclear hormone receptor family member nhr-16 (nhr-16) of Caenorhabditis elegans.